Consider the following 295-residue polypeptide: Light-independent protochlorophyllide reductase iron-sulfur ATP-binding protein (295 aa).

ATP contacts are provided by residues 39-44 (GIGKST) and Lys-68. Ser-43 provides a ligand contact to Mg(2+). [4Fe-4S] cluster is bound by residues Cys-124 and Cys-158. Position 209-210 (209-210 (NR)) interacts with ATP.

Belongs to the NifH/BchL/ChlL family. As to quaternary structure, homodimer. Protochlorophyllide reductase is composed of three subunits; ChlL, ChlN and ChlB. Requires [4Fe-4S] cluster as cofactor.

It carries out the reaction chlorophyllide a + oxidized 2[4Fe-4S]-[ferredoxin] + 2 ADP + 2 phosphate = protochlorophyllide a + reduced 2[4Fe-4S]-[ferredoxin] + 2 ATP + 2 H2O. Its pathway is porphyrin-containing compound metabolism; chlorophyll biosynthesis (light-independent). Component of the dark-operative protochlorophyllide reductase (DPOR) that uses Mg-ATP and reduced ferredoxin to reduce ring D of protochlorophyllide (Pchlide) to form chlorophyllide a (Chlide). This reaction is light-independent. The L component serves as a unique electron donor to the NB-component of the complex, and binds Mg-ATP. The chain is Light-independent protochlorophyllide reductase iron-sulfur ATP-binding protein from Prochlorococcus marinus (strain MIT 9301).